Reading from the N-terminus, the 201-residue chain is Recombination protein RecR (201 aa).

Residues Cys-57–Cys-72 form a C4-type zinc finger. Positions Gln-80–Pro-175 constitute a Toprim domain.

Belongs to the RecR family.

May play a role in DNA repair. It seems to be involved in an RecBC-independent recombinational process of DNA repair. It may act with RecF and RecO. The polypeptide is Recombination protein RecR (Dichelobacter nodosus (strain VCS1703A)).